Reading from the N-terminus, the 157-residue chain is Small ribosomal subunit protein bS6 (157 aa).

Over residues 96-151 the composition is skewed to basic and acidic residues; that stretch reads HEEGPSAMMRKADRDRDRDERGGGGFRGDREGGFRGDREGGGFRGDRGPRRPRDDA. Residues 96–157 form a disordered region; sequence HEEGPSAMMR…RDDAPAATEE (62 aa).

Belongs to the bacterial ribosomal protein bS6 family.

In terms of biological role, binds together with bS18 to 16S ribosomal RNA. The polypeptide is Small ribosomal subunit protein bS6 (Rhodopseudomonas palustris (strain BisA53)).